The sequence spans 602 residues: MPRMTQLDLIRNFSIVAHIDHGKSTLADRLIQLTGTVAERDMKAQILDSMEIERERGITIKANTVRIDYPAKDGRTYVLNLIDTPGHVDFAYEVSRSMRAVEGSLLVVDASQGVEAQTLANVYQALDAGHEIVPVLNKIDLPAAEPERVKSQIEDVIGLDASDAVLISAKSGLGIPDVLEAIVHRLPPPKGDREAPLKAMLVDSWYDAYLGVVVMIRVMDGVIRKGDRVKMMQTGAVYGIDRLAVLKPQMVDIAELGPGEIGVLTASIKQVRDTRVGDTITHEKKGCAAPLPGFKPAQPVVFCGLFPVDANDFEALREAMEKLALNDASFTYEMETSAALGFGFRCGFLGLLHLEVVRDRLEREYDLDLITTAPSVVYQIYMKDGTLQELHNPTDMPDLTYVDHIEEPRIRATIMVPDEYLGDVLKLCQDRRGIQLDLSYAGARAMVVYDLPLNEVVFDFYDRLKSVTKGYASFDYQITGYREDFLVKMSILVNDEPVDALSMMVHRDRADMRGRAMVEKLKELIPRHMFKIPIQAAIGGRVIARETISAMRKDVTAKCYGGDATRKRKLLDKQKAGKKKMRQFGKVEIPQQAFINALKMDS.

Positions 8 to 190 (DLIRNFSIVA…AIVHRLPPPK (183 aa)) constitute a tr-type G domain. GTP contacts are provided by residues 20–25 (DHGKST) and 137–140 (NKID).

It belongs to the TRAFAC class translation factor GTPase superfamily. Classic translation factor GTPase family. LepA subfamily.

It is found in the cell inner membrane. It catalyses the reaction GTP + H2O = GDP + phosphate + H(+). In terms of biological role, required for accurate and efficient protein synthesis under certain stress conditions. May act as a fidelity factor of the translation reaction, by catalyzing a one-codon backward translocation of tRNAs on improperly translocated ribosomes. Back-translocation proceeds from a post-translocation (POST) complex to a pre-translocation (PRE) complex, thus giving elongation factor G a second chance to translocate the tRNAs correctly. Binds to ribosomes in a GTP-dependent manner. The polypeptide is Elongation factor 4 (Cereibacter sphaeroides (strain KD131 / KCTC 12085) (Rhodobacter sphaeroides)).